A 668-amino-acid chain; its full sequence is Endoplasmic reticulum oxidoreductin-1 (668 aa).

The N-terminal stretch at 1–22 is a signal peptide; that stretch reads MKPASRLFYLSLFALWSPEAQC. 4 disulfides stabilise this stretch: Cys79/Cys413, Cys89/Cys94, Cys150/Cys352, and Cys416/Cys419. The segment at 116–142 is disordered; it reads KLEGPRAKHPGKSVQKEEPKRPLQGKL. Positions 186, 188, 199, 282, and 285 each coordinate FAD. N-linked (GlcNAc...) asparagine glycosylation is found at Asn298 and Asn307. Arg314 is an FAD binding site. Asn406 is a glycosylation site (N-linked (GlcNAc...) asparagine). Residue Cys416 is the Nucleophile of the active site. Cys419 is a catalytic residue. Asn443 carries N-linked (GlcNAc...) asparagine glycosylation. 2 disordered regions span residues 488–519 and 554–597; these read VEESEEGQQPQSHEQIEGSENSGAHHIPDRAK and GVTP…DPNF. Positions 494–509 are enriched in polar residues; it reads GQQPQSHEQIEGSENS. The segment covering 570–581 has biased composition (acidic residues); it reads DNNDDDDDDDEF.

This sequence belongs to the EROs family. As to quaternary structure, may function both as a monomer and a homodimer. The cofactor is FAD.

The protein resides in the endoplasmic reticulum membrane. Essential oxidoreductase that oxidizes proteins in the endoplasmic reticulum to produce disulfide bonds. Acts by oxidizing directly pdi1 isomerase through a direct disulfide exchange. Does not act as a direct oxidant of folding substrate, but relies on pdi1 to transfer oxidizing equivalent. Does not oxidize all pdi related proteins, suggesting that it can discriminate between pdi1 and related proteins. Its reoxidation probably involves electron transfer to molecular oxygen via FAD. Acts independently of glutathione. May be responsible for a significant proportion of reactive oxygen species (ROS) in the cell, thereby being a source of oxidative stress. The polypeptide is Endoplasmic reticulum oxidoreductin-1 (ero-1) (Neurospora crassa (strain ATCC 24698 / 74-OR23-1A / CBS 708.71 / DSM 1257 / FGSC 987)).